A 476-amino-acid chain; its full sequence is Monofunctional riboflavin biosynthesis protein RIBA 2, chloroplastic (476 aa).

A chloroplast-targeting transit peptide spans 1–54; it reads MASLTLRCDSTHLLPSRDVVKGTKPFGTSLVYPRIISKKFNVRMRVIPEEGDVF. Residues 44–306 are DHBP synthase; sequence MRVIPEEGDV…IADLIRYRRK (263 aa). Residues 130–131, aspartate 135, 245–249, and glutamate 269 contribute to the D-ribulose 5-phosphate site; these read RE and RAGHT. Mg(2+) is bound at residue glutamate 131. Residue histidine 248 coordinates Mg(2+). Positions 307-476 are inactive GTP cyclohydrolase II; that stretch reads RERLVEFTAV…SGKVPLITTP (170 aa). GTP contacts are provided by residues 357 to 361, glutamine 376, 399 to 401, and threonine 450; these read RVHAE and ESK.

This sequence in the N-terminal section; belongs to the DHBP synthase family. It in the C-terminal section; belongs to the GTP cyclohydrolase II family. It depends on Mg(2+) as a cofactor. Mn(2+) serves as cofactor. In terms of tissue distribution, expressed in leaves, shoots, roots, flowers and siliques.

It is found in the plastid. The protein localises to the chloroplast. The enzyme catalyses D-ribulose 5-phosphate = (2S)-2-hydroxy-3-oxobutyl phosphate + formate + H(+). It participates in cofactor biosynthesis; riboflavin biosynthesis; 2-hydroxy-3-oxobutyl phosphate from D-ribulose 5-phosphate: step 1/1. In terms of biological role, involved in riboflavin biosynthesis. Catalyzes the conversion of D-ribulose 5-phosphate to formate and 3,4-dihydroxy-2-butanone 4-phosphate. RIBA2 and RIBA3 together are not able to complement the loss of function of RIBA1. In Arabidopsis thaliana (Mouse-ear cress), this protein is Monofunctional riboflavin biosynthesis protein RIBA 2, chloroplastic (RIBA2).